A 341-amino-acid chain; its full sequence is N-acetyl-gamma-glutamyl-phosphate reductase (341 aa).

Cys163 is a catalytic residue.

It belongs to the NAGSA dehydrogenase family. Type 1 subfamily.

The protein resides in the cytoplasm. The enzyme catalyses N-acetyl-L-glutamate 5-semialdehyde + phosphate + NADP(+) = N-acetyl-L-glutamyl 5-phosphate + NADPH + H(+). The protein operates within amino-acid biosynthesis; L-arginine biosynthesis; N(2)-acetyl-L-ornithine from L-glutamate: step 3/4. Catalyzes the NADPH-dependent reduction of N-acetyl-5-glutamyl phosphate to yield N-acetyl-L-glutamate 5-semialdehyde. The polypeptide is N-acetyl-gamma-glutamyl-phosphate reductase (Idiomarina loihiensis (strain ATCC BAA-735 / DSM 15497 / L2-TR)).